We begin with the raw amino-acid sequence, 299 residues long: Probable 3-hydroxyisobutyrate dehydrogenase-like 2, mitochondrial (299 aa).

NAD(+) contacts are provided by residues threonine 14–alanine 43 and serine 108. Lysine 182 is an active-site residue. Residue lysine 250 coordinates NAD(+).

The protein belongs to the HIBADH-related family. 3-hydroxyisobutyrate dehydrogenase subfamily.

Its subcellular location is the mitochondrion. The enzyme catalyses 3-hydroxy-2-methylpropanoate + NAD(+) = 2-methyl-3-oxopropanoate + NADH + H(+). It participates in amino-acid degradation; L-valine degradation. The protein is Probable 3-hydroxyisobutyrate dehydrogenase-like 2, mitochondrial of Arabidopsis thaliana (Mouse-ear cress).